The sequence spans 85 residues: Conotoxin Lt28.2 (85 aa).

Residues 1 to 21 form the signal peptide; that stretch reads MPKLEMMLLVLLILPLCYIDA. Positions 22-40 are excised as a propeptide; it reads VGPPPPWNMEDEIIEHWQK.

The protein belongs to the conotoxin D superfamily. Contains 5 disulfide bonds. Expressed by the venom duct.

The protein resides in the secreted. Functionally, probable neurotoxin. This is Conotoxin Lt28.2 from Conus litteratus (Lettered cone).